The sequence spans 292 residues: Elongation factor Ts (292 aa).

The involved in Mg(2+) ion dislocation from EF-Tu stretch occupies residues T82–V85.

It belongs to the EF-Ts family.

Its subcellular location is the cytoplasm. Its function is as follows. Associates with the EF-Tu.GDP complex and induces the exchange of GDP to GTP. It remains bound to the aminoacyl-tRNA.EF-Tu.GTP complex up to the GTP hydrolysis stage on the ribosome. This chain is Elongation factor Ts, found in Bordetella bronchiseptica (strain ATCC BAA-588 / NCTC 13252 / RB50) (Alcaligenes bronchisepticus).